A 91-amino-acid chain; its full sequence is UPF0358 protein SAB0977 (91 aa).

It belongs to the UPF0358 family.

This Staphylococcus aureus (strain bovine RF122 / ET3-1) protein is UPF0358 protein SAB0977.